An 834-amino-acid polypeptide reads, in one-letter code: Taste receptor type 1 member 2 (834 aa).

The signal sequence occupies residues 1 to 19 (MEPRVRTVCFLFFLLRVLA). At 20–561 (EPAKNSDFYL…SFLEWHEAAT (542 aa)) the chain is on the extracellular side. N-linked (GlcNAc...) asparagine glycans are attached at residues N84, N292, N312, N363, N423, N482, and N522. Residues 562 to 582 (IAVALLAALGFLSTLAILVIF) form a helical membrane-spanning segment. Residues 583–597 (WRHFETPMVRSAGGP) lie on the Cytoplasmic side of the membrane. The helical transmembrane segment at 598–618 (MCFLMLTLLLVAYMVVPVYVG) threads the bilayer. The Extracellular segment spans residues 619–630 (LPKVSTCLCRQA). Residues 631–651 (LFPVCFTICISCIAVRSFQIV) traverse the membrane as a helical segment. At 652–676 (CVFKMASRFPRAYSYWVRYQGSYVS) the chain is on the cytoplasmic side. Residues 677–697 (VAFITALKMVTVVISLLATGL) form a helical membrane-spanning segment. Over 698 to 722 (NPTTRTDTDDPKIMIISCNPNYRNS) the chain is Extracellular. A helical transmembrane segment spans residues 723-743 (LLFNTSLDLLLSVAGFSFAYM). Residues 744 to 755 (GKELPTNYNEAK) lie on the Cytoplasmic side of the membrane. The chain crosses the membrane as a helical span at residues 756-776 (FITFSMTFYFTSSVSLCTFMS). Residues 777 to 779 (VYD) lie on the Extracellular side of the membrane. A helical transmembrane segment spans residues 780-800 (GVLVTIVDLLVTVFNLLAISL). Residues 801-834 (GYFGPKCYMILFYPERNTPAYFNSMIQGYTMRRD) are Cytoplasmic-facing.

The protein belongs to the G-protein coupled receptor 3 family. TAS1R subfamily. Forms heterodimers with TAS1R3.

The protein resides in the cell membrane. In terms of biological role, putative taste receptor. TAS1R2/TAS1R3 recognizes diverse natural and synthetic sweeteners. This Saimiri sciureus (Common squirrel monkey) protein is Taste receptor type 1 member 2 (TAS1R2).